Consider the following 108-residue polypeptide: Phosphoribosyl-ATP pyrophosphatase (108 aa).

The segment at 88-108 (VENELDRREGRSGIEEKASRK) is disordered. The span at 91-108 (ELDRREGRSGIEEKASRK) shows a compositional bias: basic and acidic residues.

This sequence belongs to the PRA-PH family.

It is found in the cytoplasm. The enzyme catalyses 1-(5-phospho-beta-D-ribosyl)-ATP + H2O = 1-(5-phospho-beta-D-ribosyl)-5'-AMP + diphosphate + H(+). It functions in the pathway amino-acid biosynthesis; L-histidine biosynthesis; L-histidine from 5-phospho-alpha-D-ribose 1-diphosphate: step 2/9. This is Phosphoribosyl-ATP pyrophosphatase from Paracoccus denitrificans (strain Pd 1222).